Reading from the N-terminus, the 511-residue chain is Mannosyl-oligosaccharide alpha-1,2-mannosidase (511 aa).

A signal peptide spans 1 to 35; the sequence is MRLPVSFPLTVLSLLGSTIAHPYGETEAVLRSEPK. N182 is a glycosylation site (N-linked (GlcNAc...) asparagine). C332 and C361 form a disulfide bridge. A glycan (N-linked (GlcNAc...) asparagine) is linked at N366. The active-site Proton donor is D375. N438 carries an N-linked (GlcNAc...) asparagine glycan. T501 is a binding site for Ca(2+).

This sequence belongs to the glycosyl hydrolase 47 family. In terms of assembly, homodimer. The cofactor is Ca(2+).

It localises to the secreted. It carries out the reaction N(4)-(alpha-D-Man-(1-&gt;2)-alpha-D-Man-(1-&gt;2)-alpha-D-Man-(1-&gt;3)-[alpha-D-Man-(1-&gt;2)-alpha-D-Man-(1-&gt;3)-[alpha-D-Man-(1-&gt;2)-alpha-D-Man-(1-&gt;6)]-alpha-D-Man-(1-&gt;6)]-beta-D-Man-(1-&gt;4)-beta-D-GlcNAc-(1-&gt;4)-beta-D-GlcNAc)-L-asparaginyl-[protein] (N-glucan mannose isomer 9A1,2,3B1,2,3) + 4 H2O = N(4)-(alpha-D-Man-(1-&gt;3)-[alpha-D-Man-(1-&gt;3)-[alpha-D-Man-(1-&gt;6)]-alpha-D-Man-(1-&gt;6)]-beta-D-Man-(1-&gt;4)-beta-D-GlcNAc-(1-&gt;4)-beta-D-GlcNAc)-L-asparaginyl-[protein] (N-glucan mannose isomer 5A1,2) + 4 beta-D-mannose. It catalyses the reaction N(4)-(alpha-D-Man-(1-&gt;2)-alpha-D-Man-(1-&gt;2)-alpha-D-Man-(1-&gt;3)-[alpha-D-Man-(1-&gt;3)-[alpha-D-Man-(1-&gt;2)-alpha-D-Man-(1-&gt;6)]-alpha-D-Man-(1-&gt;6)]-beta-D-Man-(1-&gt;4)-beta-D-GlcNAc-(1-&gt;4)-beta-D-GlcNAc)-L-asparaginyl-[protein] (N-glucan mannose isomer 8A1,2,3B1,3) + 3 H2O = N(4)-(alpha-D-Man-(1-&gt;3)-[alpha-D-Man-(1-&gt;3)-[alpha-D-Man-(1-&gt;6)]-alpha-D-Man-(1-&gt;6)]-beta-D-Man-(1-&gt;4)-beta-D-GlcNAc-(1-&gt;4)-beta-D-GlcNAc)-L-asparaginyl-[protein] (N-glucan mannose isomer 5A1,2) + 3 beta-D-mannose. It functions in the pathway protein modification; protein glycosylation. Involved in the maturation of Asn-linked oligosaccharides. Progressively trim alpha-1,2-linked mannose residues from Man(9)GlcNAc(2) to produce Man(5)GlcNAc(2). The protein is Mannosyl-oligosaccharide alpha-1,2-mannosidase (MSDC) of Penicillium citrinum.